Consider the following 105-residue polypeptide: MSKLHTLVDICMVPLGTSSPSVSDYVTKIEKRIRESHLKSTMHSFGTTIEGPWDEVMSLIGQLHEYSHELGYVRIHTEMRLGTRTDKQQTAQDKVDVVEKKLSDY.

It belongs to the UPF0045 family.

The polypeptide is UPF0045 protein ECM15 (ECM15) (Eremothecium gossypii (strain ATCC 10895 / CBS 109.51 / FGSC 9923 / NRRL Y-1056) (Yeast)).